The following is an 820-amino-acid chain: Leucine--tRNA ligase (820 aa).

Positions 42–52 (PYPSGDLHMGH) match the 'HIGH' region motif. A 'KMSKS' region motif is present at residues 576–580 (KMSKS). Lys-579 lines the ATP pocket.

Belongs to the class-I aminoacyl-tRNA synthetase family.

Its subcellular location is the cytoplasm. The catalysed reaction is tRNA(Leu) + L-leucine + ATP = L-leucyl-tRNA(Leu) + AMP + diphosphate. The polypeptide is Leucine--tRNA ligase (Coxiella burnetii (strain CbuK_Q154) (Coxiella burnetii (strain Q154))).